Here is a 344-residue protein sequence, read N- to C-terminus: MSGEPELIELRELAPAGRAGKGRTRLERANALRIARGTACNPTRQLVPGRGHRFQPAGPATHTWCDLCGDFIWGVVRKGLQCARLSADCKFTCHYRCRALVCLDCCGPRDLGWEPAVERDTNVDEPVEWETPDLSQAEIEQKIKEYNAQINSNLFMSLNKDGSYTGFIKVQLKLVRPVSVPSSKKPPSLQDARRGPGRGTSVRRRTSFYLPKDAVKHLHVLSRTRAREVIEALLRKFLVVDDPRKFALFERAERHGQVYLRKLLDDEQPLRLRLLAGPSDKALSFVLKENDSGEVNWDAFSMPELHNFLRILQREEEEHLRQILQKYSYCRQKIQEALHACPLG.

The residue at position 2 (Ser2) is an N-acetylserine. Ser2 carries the phosphoserine modification. A mediates interaction with E4F1 region spans residues 2 to 119; the sequence is SGEPELIELR…DLGWEPAVER (118 aa). Arg36 carries the post-translational modification Omega-N-methylarginine. The Phorbol-ester/DAG-type zinc finger occupies 51–105; sequence GHRFQPAGPATHTWCDLCGDFIWGVVRKGLQCARLSADCKFTCHYRCRALVCLDC. The span at 179–189 shows a compositional bias: low complexity; sequence SVPSSKKPPSL. The interval 179–203 is disordered; that stretch reads SVPSSKKPPSLQDARRGPGRGTSVR. Residues 198–292 enclose the Ras-associating domain; the sequence is RGTSVRRRTS…LSFVLKENDS (95 aa). One can recognise an SARAH domain in the interval 294–341; it reads EVNWDAFSMPELHNFLRILQREEEEHLRQILQKYSYCRQKIQEALHAC. Positions 315 to 318 are MOAP1-binding; that stretch reads EEEE.

As to quaternary structure, interacts with MAP1S. Interacts with XPA. Binds to the N-terminal of CDC20 during prometaphase. Binds to STK3/MST2 and STK4/MST1. Recruited to the TNFRSF1A and TNFRSF10A complexes in response to their respective cognate ligand, after internalization. Can self-associate. Part of a complex with MDM2, DAXX, RASSF1 and USP7. Interacts with ECM2. Interacts with MOAP1. Interacts with E4F1. Interacts with RSSF5 and probably associates with HRAS via a RSSF1 isoform A-RSSF5 heterodimer. Interacts (via C-terminus) with DAXX (via N-terminus); the interaction is independent of MDM2 and TP53. Interacts (via N-terminus) with MDM2 (via C-terminus); the interaction is independent of TP53. Interacts with RAB39A. Interacts with RAB39B; the interaction is weak. In terms of assembly, interacts (via N-terminus) with DAXX. Interacts with RAB39B; the interaction is strong. Does not interact with RAB39A. As to quaternary structure, interacts (via N-terminus) with DAXX. Isoform A and isoform C are ubiquitously expressed in all tissues tested, however isoform A is absent in many corresponding cancer cell lines. Isoform B is mainly expressed in hematopoietic cells.

The protein localises to the cytoplasm. Its subcellular location is the cytoskeleton. It localises to the microtubule organizing center. It is found in the centrosome. The protein resides in the spindle. The protein localises to the spindle pole. Its subcellular location is the nucleus. Functionally, potential tumor suppressor. Required for death receptor-dependent apoptosis. Mediates activation of STK3/MST2 and STK4/MST1 during Fas-induced apoptosis by preventing their dephosphorylation. When associated with MOAP1, promotes BAX conformational change and translocation to mitochondrial membranes in response to TNF and TNFSF10 stimulation. Isoform A interacts with CDC20, an activator of the anaphase-promoting complex, APC, resulting in the inhibition of APC activity and mitotic progression. Inhibits proliferation by negatively regulating cell cycle progression at the level of G1/S-phase transition by regulating accumulation of cyclin D1 protein. Isoform C has been shown not to perform these roles, no function has been identified for this isoform. Isoform A disrupts interactions among MDM2, DAXX and USP7, thus contributing to the efficient activation of TP53 by promoting MDM2 self-ubiquitination in cell-cycle checkpoint control in response to DNA damage. The protein is Ras association domain-containing protein 1 of Homo sapiens (Human).